A 58-amino-acid chain; its full sequence is Large ribosomal subunit protein bL32 (58 aa).

This sequence belongs to the bacterial ribosomal protein bL32 family.

In Ligilactobacillus salivarius (strain UCC118) (Lactobacillus salivarius), this protein is Large ribosomal subunit protein bL32.